The following is a 209-amino-acid chain: Ribonuclease HII (209 aa).

An RNase H type-2 domain is found at 7–198 (GPVAGVDEAG…VAKAHQEWLH (192 aa)). A divalent metal cation-binding residues include Asp13, Glu14, and Asp107.

Belongs to the RNase HII family. Mn(2+) serves as cofactor. Mg(2+) is required as a cofactor.

Its subcellular location is the cytoplasm. The catalysed reaction is Endonucleolytic cleavage to 5'-phosphomonoester.. Endonuclease that specifically degrades the RNA of RNA-DNA hybrids. The polypeptide is Ribonuclease HII (Corynebacterium glutamicum (strain R)).